The following is a 361-amino-acid chain: Rho-GTPase-activating protein 5 (361 aa).

The 194-residue stretch at 52–245 (IFLTRRDGEK…FLINHQGSFI (194 aa)) folds into the Rho-GAP domain. Over residues 306–323 (SSATYSNSPSSNFSNMKS) the composition is skewed to low complexity. The segment at 306–345 (SSATYSNSPSSNFSNMKSSEVDPGSPPRIKSRSYSLSRSS) is disordered.

The protein localises to the membrane. Its function is as follows. GTPase-activating protein for Rho1. Has a role in the negative regulation of (1-3)beta-D-glucan synthase activity and cell integrity. The chain is Rho-GTPase-activating protein 5 (rga5) from Schizosaccharomyces pombe (strain 972 / ATCC 24843) (Fission yeast).